The chain runs to 207 residues: ATP-dependent Clp protease proteolytic subunit 2 (207 aa).

Catalysis depends on Ser-102, which acts as the Nucleophile. Residue His-127 is part of the active site.

It belongs to the peptidase S14 family. In terms of assembly, fourteen ClpP subunits assemble into 2 heptameric rings which stack back to back to give a disk-like structure with a central cavity, resembling the structure of eukaryotic proteasomes.

The protein resides in the cytoplasm. The enzyme catalyses Hydrolysis of proteins to small peptides in the presence of ATP and magnesium. alpha-casein is the usual test substrate. In the absence of ATP, only oligopeptides shorter than five residues are hydrolyzed (such as succinyl-Leu-Tyr-|-NHMec, and Leu-Tyr-Leu-|-Tyr-Trp, in which cleavage of the -Tyr-|-Leu- and -Tyr-|-Trp bonds also occurs).. Its function is as follows. Cleaves peptides in various proteins in a process that requires ATP hydrolysis. Has a chymotrypsin-like activity. Plays a major role in the degradation of misfolded proteins. The chain is ATP-dependent Clp protease proteolytic subunit 2 from Bifidobacterium longum (strain NCC 2705).